The primary structure comprises 661 residues: UvrABC system protein B (661 aa).

A Helicase ATP-binding domain is found at 28 to 414; the sequence is DGVNEGKRHQ…HTDEMVEQII (387 aa). An ATP-binding site is contributed by 41–48; it reads GATGTGKT. The Beta-hairpin motif lies at 94 to 117; that stretch reads YYDYYQPEAYVPSTDTFIEKDASI. In terms of domain architecture, Helicase C-terminal spans 432 to 598; sequence QIDDLLSEIQ…TINKKIHDVI (167 aa). The interval 603–624 is disordered; sequence ESDETNQQQQTELPKKMTKKER. Residues 625-660 enclose the UVR domain; sequence QKTIENIEKEMKKAAKDLDFEKATELRDMLFELKAE.

The protein belongs to the UvrB family. In terms of assembly, forms a heterotetramer with UvrA during the search for lesions. Interacts with UvrC in an incision complex.

It is found in the cytoplasm. Its function is as follows. The UvrABC repair system catalyzes the recognition and processing of DNA lesions. A damage recognition complex composed of 2 UvrA and 2 UvrB subunits scans DNA for abnormalities. Upon binding of the UvrA(2)B(2) complex to a putative damaged site, the DNA wraps around one UvrB monomer. DNA wrap is dependent on ATP binding by UvrB and probably causes local melting of the DNA helix, facilitating insertion of UvrB beta-hairpin between the DNA strands. Then UvrB probes one DNA strand for the presence of a lesion. If a lesion is found the UvrA subunits dissociate and the UvrB-DNA preincision complex is formed. This complex is subsequently bound by UvrC and the second UvrB is released. If no lesion is found, the DNA wraps around the other UvrB subunit that will check the other stand for damage. This is UvrABC system protein B from Staphylococcus epidermidis (strain ATCC 35984 / DSM 28319 / BCRC 17069 / CCUG 31568 / BM 3577 / RP62A).